The chain runs to 368 residues: Alcohol dehydrogenase 6 (368 aa).

Position 23 is a phosphoserine (Ser23). Zn(2+)-binding residues include Cys47, His69, Cys99, Cys102, Cys105, Cys113, and Cys175. NAD(+) contacts are provided by residues 200-205 (GLGGVG), Asp224, Lys229, and 293-295 (VGV).

This sequence belongs to the zinc-containing alcohol dehydrogenase family. Class-V subfamily. Dimer. Zn(2+) is required as a cofactor. As to expression, stomach and liver.

It is found in the cytoplasm. The enzyme catalyses a primary alcohol + NAD(+) = an aldehyde + NADH + H(+). It carries out the reaction a secondary alcohol + NAD(+) = a ketone + NADH + H(+). Inhibited partially by pyrazole (10 mM) in the reaction mixture containing 100 mM ethanol at pH 10.0. Alcohol dehydrogenase. Catalyzes the NAD-dependent oxidation of primary alcohols to the corresponding aldehydes. Oxidizes secondary alcohols to the corresponding ketones. The polypeptide is Alcohol dehydrogenase 6 (ADH6) (Homo sapiens (Human)).